The chain runs to 607 residues: MDNEQRLKRRENIRNFSIIAHIDHGKSTLADRILENTKSVETRDMQDQLLDSMDLERERGITIKLNAVRLKYEAKDGNTYTFHLIDTPGHVDFTYEVSRSLAACEGAILVVDAAQGIEAQTLANVYLALDNELELLPVINKIDLPAAEPERVKQEIEDMIGLDQDDVVLASAKSNIGIEEILEKIVEVVPAPDGDPEAPLKALIFDSEYDPYRGVISSIRIVDGVVKAGDKIRMMATGKEFEVTEVGINTPKQLPVDELTVGDVGYIIASIKNVDDSRVGDTITLASRPASEPLQGYKKMNPMVYCGLFPIDNKNYNDLREALEKLQLNDASLEFEPESSQALGFGYRTGFLGMLHMEIIQERIEREFGIELIATAPSVIYQCILRDGSEVTVDNPAQMPDRDKIDKIFEPYVRATMMVPNDYVGAVMELCQRKRGQFINMDYLDDIRVNIVYELPLAEVVFDFFDQLKSNTKGYASFDYEFIENKESNLVKMDILLNGDKVDALSFIVHRDFAYERGKALVEKLKTLIPRQQFEVPVQAAIGQKIVARTNIKSMGKNVLAKCYGGDISRKRKLLEKQKAGKAKMKAVGNVEIPQDAFLAVLKMDDE.

Positions 11–193 constitute a tr-type G domain; it reads ENIRNFSIIA…KIVEVVPAPD (183 aa). GTP contacts are provided by residues 23–28 and 140–143; these read DHGKST and NKID.

This sequence belongs to the TRAFAC class translation factor GTPase superfamily. Classic translation factor GTPase family. LepA subfamily.

Its subcellular location is the cell membrane. It catalyses the reaction GTP + H2O = GDP + phosphate + H(+). Functionally, required for accurate and efficient protein synthesis under certain stress conditions. May act as a fidelity factor of the translation reaction, by catalyzing a one-codon backward translocation of tRNAs on improperly translocated ribosomes. Back-translocation proceeds from a post-translocation (POST) complex to a pre-translocation (PRE) complex, thus giving elongation factor G a second chance to translocate the tRNAs correctly. Binds to ribosomes in a GTP-dependent manner. The sequence is that of Elongation factor 4 from Staphylococcus aureus (strain N315).